Here is a 274-residue protein sequence, read N- to C-terminus: MKLYMSVDMEGISGLPDDTFVDSGKRNYERGRLIMTEEANYCIAEAFNSGCTEVLVNDSHSKMNNLMVEKLHPEADLISGDVKPFSMVEGLDDTFRGALFLGYHARASTPGVMSHSMIFGVRHFYINDRPVGELGLNAYVAGYYDVPVLMVAGDDRAAKEAEELIPNVTTAAVKQTISRSAVKCLSPAKAGRLLTEKTAFALQNKDKVKPLTPPDRPVLSIEFANYGQAEWANLMPGTEIKTGTTTVQFQAKDMLEAYQAMLVMTELAMRTSFC.

Residues Asp-8, Glu-10, His-60, and His-104 each contribute to the Zn(2+) site. The Nucleophile role is filled by His-115. A Zn(2+)-binding site is contributed by Glu-133.

The protein belongs to the peptidase M55 family. In terms of assembly, homodecamer. A 20 Angstroms wide channel runs through the complex, giving access to a central chamber holding the active sites. The cofactor is Zn(2+).

Hydrolyzes N-terminal residues in D-amino acid containing peptides. Among the tested substrates, the highest activities are with D-Ala-D-Ala and D-Ala-Gly-Gly. The physiological role is not clear. The sequence is that of D-aminopeptidase (dppA) from Bacillus subtilis (strain 168).